The sequence spans 44 residues: Cytochrome b559 subunit beta (44 aa).

The chain crosses the membrane as a helical span at residues 19–35 (WLAVHTLGVPTVFFLGA). Heme is bound at residue His23.

It belongs to the PsbE/PsbF family. Heterodimer of an alpha subunit and a beta subunit. PSII is composed of 1 copy each of membrane proteins PsbA, PsbB, PsbC, PsbD, PsbE, PsbF, PsbH, PsbI, PsbJ, PsbK, PsbL, PsbM, PsbT, PsbX, PsbY, PsbZ, Psb30/Ycf12, peripheral proteins PsbO, CyanoQ (PsbQ), PsbU, PsbV and a large number of cofactors. It forms dimeric complexes. Requires heme b as cofactor.

It is found in the cellular thylakoid membrane. Its function is as follows. This b-type cytochrome is tightly associated with the reaction center of photosystem II (PSII). PSII is a light-driven water:plastoquinone oxidoreductase that uses light energy to abstract electrons from H(2)O, generating O(2) and a proton gradient subsequently used for ATP formation. It consists of a core antenna complex that captures photons, and an electron transfer chain that converts photonic excitation into a charge separation. In Trichodesmium erythraeum (strain IMS101), this protein is Cytochrome b559 subunit beta.